Here is a 1196-residue protein sequence, read N- to C-terminus: Phosphoglucan, water dikinase, chloroplastic (1196 aa).

A chloroplast-targeting transit peptide spans 1–54 (MESIGSHCCSSPFTFITRNSSSSLPRLVNITHRVNLSHQSHRLRNSNSRLTCTA). Thr-55 is subject to N-acetylthreonine. One can recognise a CBM20 domain in the interval 66–166 (KKDGSGTKVR…NFSVVCHWDA (101 aa)). The disordered stretch occupies residues 174–200 (PQEVGNDDDVGDGGHERDNHDVGDDRV). The segment covering 185–200 (DGGHERDNHDVGDDRV) has biased composition (basic and acidic residues). His-759 (tele-phosphohistidine intermediate) is an active-site residue. The tract at residues 804–855 (LSTEGRSRTSKSSATKKTDKNSLSKKKTDKKSLSIDDEESKPGSSSSNSLLY) is disordered.

Belongs to the PEP-utilizing enzyme family. Homodimer. Requires Mg(2+) as cofactor. In terms of tissue distribution, in all starch containing tissues (e.g. roots, leaves, stems, inflorescence and siliques).

Its subcellular location is the plastid. It is found in the chloroplast. It carries out the reaction [(1-&gt;4)-6-phospho-alpha-D-glucosyl](n) + n ATP + n H2O = [(1-&gt;4)-3,6-bisphospho-alpha-D-glucosyl](n) + n AMP + n phosphate + 2n H(+). In terms of biological role, mediates the incorporation of phosphate into starch-like phospho-alpha-glucan, mostly at the C-3 position of glucose units. Required for starch degradation, suggesting that the phosphate content of starch regulates its degradability. This chain is Phosphoglucan, water dikinase, chloroplastic (GWD3), found in Arabidopsis thaliana (Mouse-ear cress).